The sequence spans 517 residues: NEDD8-activating enzyme E1 regulatory subunit (517 aa).

This sequence belongs to the ubiquitin-activating E1 family. ULA1 subfamily. Heterodimer of uba3 and ula1. The complex binds NEDD8/ubl1 and ubc12.

It localises to the cytoplasm. The protein resides in the nucleus. The protein operates within protein modification; protein neddylation. In terms of biological role, regulatory subunit of the dimeric uba3-ula1 E1 enzyme. E1 activates NEDD8/ubl1 by first adenylating its C-terminal glycine residue with ATP, thereafter linking this residue to the side chain of the catalytic cysteine, yielding a NEDD8-UBA3 thioester and free AMP. E1 finally transfers NEDD8 to the catalytic cysteine of ubc12. The polypeptide is NEDD8-activating enzyme E1 regulatory subunit (uba5) (Schizosaccharomyces pombe (strain 972 / ATCC 24843) (Fission yeast)).